A 134-amino-acid polypeptide reads, in one-letter code: Ribonuclease VapC1 (134 aa).

A PINc domain is found at I4–Q123. Residues D6 and D97 each contribute to the Mg(2+) site.

This sequence belongs to the PINc/VapC protein family. It depends on Mg(2+) as a cofactor.

Its function is as follows. Toxic component of a type II toxin-antitoxin (TA) system. Has ssRNase activity. Upon expression in E.coli inhibits growth in liquid culture; this toxic effect is neutralized by coexpression with cognate antitoxin VapB1. Its RNase activity is partially inhibited in vitro by VapB1. This chain is Ribonuclease VapC1, found in Rickettsia felis (strain ATCC VR-1525 / URRWXCal2) (Rickettsia azadi).